Reading from the N-terminus, the 563-residue chain is Cytochrome P450 monooxygenase phqL (563 aa).

The next 3 membrane-spanning stretches (helical) occupy residues Glu-20–Phe-40, Ile-52–Gly-72, and Ala-80–Leu-100. Asn-279 carries N-linked (GlcNAc...) asparagine glycosylation. The helical transmembrane segment at Leu-362–Leu-382 threads the bilayer. N-linked (GlcNAc...) asparagine glycosylation is present at Asn-419. A heme-binding site is contributed by Cys-502.

The protein belongs to the cytochrome P450 family. It depends on heme as a cofactor.

The protein localises to the membrane. It functions in the pathway alkaloid biosynthesis. Cytochrome P450 monooxygenase; part of the gene cluster that mediates the biosynthesis of paraherquamide, a fungal indole alkaloid that belongs to a family of natural products containing a characteristic bicyclo[2.2.2]diazaoctane core. The first steps in the biosynthesis of paraherquamide is the production of the beta-methyl-proline precursor from L-isoleucine. They require oxidation of a terminally hydroxylated L-isoleucine to the corresponding aldehyde by enzymes which have still to be identified. Spontaneous cyclization and dehydration would yield the 4-methyl pyrolline-5-carboxylic acid, which is then reduced by the pyrroline-5-carboxylate reductase phqD leading to the beta-methyl-proline precursor. The next step of paraherquamide biosynthesis involves coupling of beta-methyl-proline and L-tryptophan by the bimodular NRPS phqB, to produce a monooxopiperazine intermediate. The reductase (R) domain of phqB utilizes NADPH for hydride transfer to reduce the thioester bond of the T domain-tethered linear dipeptide to a hemithioaminal intermediate, which spontaneously cleaves the C-S bond to release the aldehyde product. This compound undergoes spontaneous cyclization and dehydration to give a dienamine which is reverse prenylated at C-2 by the reverse prenyltransferase phqJ. The other prenyltransferase present in the cluster, phqI may be a redundant gene in the pathway. During biosynthetic assembly, the key step to produce the polycyclic core is catalyzed by the bifunctional reductase and intramolecular [4+2] Diels-Alderase, phqE, resulting in formation of the [2.2.2] diazaoctane intermediate preparaherquamide. Following formation of preparaherquamide, an indole 2,3-epoxidation-initiated pinacol-like rearrangement is catalyzed by the phqK FAD-dependent monooxygenase. The prenyltransferase phqA, the cytochrome P450 monooxygenase phqL, and the FAD-linked oxidoreductase phqH (or the cytochrome P450 monooxygenase phqM), are proposed to be involved in the formation of the pyran ring. The FAD-dependent monooxygenase phqK is likely responsible for generation of the spiro-oxindole, and the N-methylation is likely mediated by the phqN methyltransferase leading to the isolable natural product paraherquamide F. However, the order of these biosynthetic steps has still to be determined. In late-stage paraherquamide biosynthesis, the third P450 monooxygenase, phqO, is probably responsible for the C-14 hydroxylation, transforming paraherquamide F to paraherquamide G, and paraherquamide E to the final product paraherquamide A. The expansion from the 6-membered ring pyran (in paraherquamides F and G) to the 7-membered dioxepin ring (in paraherquamides A and E) represents a poorly understood but intriguing process that probably involves the 2-oxoglutarate-dependent dioxygenase phqC. Finally, the remaining members of the paraherquamide cluster, including phqI as well as phqM (or phqH), do not have a clearly prescribed role and appear to be redundant. The polypeptide is Cytochrome P450 monooxygenase phqL (Penicillium fellutanum).